A 462-amino-acid polypeptide reads, in one-letter code: Nitrate/nitrite transporter NarU (462 aa).

At 1–35 (MALQNEKNSRYLLRDWKPENPAFWENKGKHIARRN) the chain is on the cytoplasmic side. Residues 36–56 (LWISVSCLLLAFCVWMLFSAV) form a helical membrane-spanning segment. Topologically, residues 57-76 (TVNLNKIGFNFTTDQLFLLT) are periplasmic. Residues 77–97 (ALPSVSGALLRVPYSFMVPIF) traverse the membrane as a helical segment. Residues 98 to 101 (GGRR) are Cytoplasmic-facing. Residues 102–122 (WTVFSTAILIIPCVWLGIAVQ) form a helical membrane-spanning segment. Over 123-125 (NPN) the chain is Periplasmic. The helical transmembrane segment at 126–146 (TPFGIFIVIALLCGFAGANFA) threads the bilayer. Over 147–180 (SSMGNISFFFPKAKQGSALGINGGLGNLGVSVMQ) the chain is Cytoplasmic. A helical membrane pass occupies residues 181 to 201 (LVAPLVIFVPVFAFLGVNGVP). Topologically, residues 202–206 (QADGS) are periplasmic. A helical membrane pass occupies residues 207–227 (VMSLANAAWIWVPLLAIATIA). Over 228-258 (AWSGMNDIASSRASIADQLPVLQRLHLWLLS) the chain is Cytoplasmic. The helical transmembrane segment at 259 to 279 (LLYLATFGSFIGFSAGFAMLA) threads the bilayer. The Periplasmic segment spans residues 280 to 287 (KTQFPDVN). The helical transmembrane segment at 288–308 (ILRLAFFGPFIGAIARSVGGA) threads the bilayer. Residues 309–317 (ISDKFGGVR) lie on the Cytoplasmic side of the membrane. A helical transmembrane segment spans residues 318–338 (VTLINFIFMAIFSALLFLTLP). Residues 339-344 (GTGSGN) are Periplasmic-facing. The chain crosses the membrane as a helical span at residues 345-365 (FIAFYAVFMGLFLTAGLGSGS). Residues 366 to 401 (TFQMIAVIFRQITIYRVKMKGGSDEQAHKEAVTETA) are Cytoplasmic-facing. A helical membrane pass occupies residues 402–422 (AALGFISAIGAVGGFFIPQAF). Over 423–432 (GMSLNMTGSP) the chain is Periplasmic. The helical transmembrane segment at 433–453 (VGAMKVFLIFYIVCVLLTWLV) threads the bilayer. The Cytoplasmic portion of the chain corresponds to 454–462 (YGRRKFSQK).

This sequence belongs to the major facilitator superfamily. Nitrate/nitrite porter (TC 2.A.1.8) family.

The protein resides in the cell inner membrane. Functionally, catalyzes nitrate uptake, nitrite uptake and nitrite export across the cytoplasmic membrane. May function as a nitrate/H(+) and nitrite/H(+) channel. Could confer a selective advantage during severe nutrient starvation or slow growth. This Escherichia coli (strain K12) protein is Nitrate/nitrite transporter NarU (narU).